A 488-amino-acid chain; its full sequence is Inosine-5'-monophosphate dehydrogenase (488 aa).

2 CBS domains span residues 95–153 (VISN…SIKI) and 157–216 (MTQE…AKDE). Residues Asp-250 and 300 to 302 (GIG) contribute to the NAD(+) site. Residues Gly-302 and Gly-304 each contribute to the K(+) site. Ser-305 lines the IMP pocket. K(+) is bound at residue Cys-307. Catalysis depends on Cys-307, which acts as the Thioimidate intermediate. Residues 340–342 (DGG), 363–364 (GS), and 387–391 (YRGMG) each bind IMP. The active-site Proton acceptor is Arg-403. IMP is bound at residue Glu-417. The tract at residues 468–488 (GLAESHPHNIQITKESPNYSF) is disordered. Glu-471, Ser-472, and His-473 together coordinate K(+). Residues 475–488 (HNIQITKESPNYSF) are compositionally biased toward polar residues.

It belongs to the IMPDH/GMPR family. In terms of assembly, homotetramer. K(+) is required as a cofactor.

It catalyses the reaction IMP + NAD(+) + H2O = XMP + NADH + H(+). The protein operates within purine metabolism; XMP biosynthesis via de novo pathway; XMP from IMP: step 1/1. Its activity is regulated as follows. Mycophenolic acid (MPA) is a non-competitive inhibitor that prevents formation of the closed enzyme conformation by binding to the same site as the amobile flap. In contrast, mizoribine monophosphate (MZP) is a competitive inhibitor that induces the closed conformation. MPA is a potent inhibitor of mammalian IMPDHs but a poor inhibitor of the bacterial enzymes. MZP is a more potent inhibitor of bacterial IMPDH. Functionally, catalyzes the conversion of inosine 5'-phosphate (IMP) to xanthosine 5'-phosphate (XMP), the first committed and rate-limiting step in the de novo synthesis of guanine nucleotides, and therefore plays an important role in the regulation of cell growth. In Staphylococcus aureus (strain Mu50 / ATCC 700699), this protein is Inosine-5'-monophosphate dehydrogenase.